Reading from the N-terminus, the 467-residue chain is DNA polymerase IV (467 aa).

In terms of domain architecture, UmuC spans 5–187 (VLHIDMDAFF…LPVGALWGVG (183 aa)). Mg(2+) contacts are provided by Asp-9 and Asp-104. The active site involves Glu-105. Disordered regions lie at residues 364-386 (PDTD…VEAP) and 428-449 (TKGR…DPLD).

Belongs to the DNA polymerase type-Y family. Monomer. It depends on Mg(2+) as a cofactor.

It is found in the cytoplasm. The catalysed reaction is DNA(n) + a 2'-deoxyribonucleoside 5'-triphosphate = DNA(n+1) + diphosphate. Its function is as follows. Poorly processive, error-prone DNA polymerase involved in untargeted mutagenesis. Copies undamaged DNA at stalled replication forks, which arise in vivo from mismatched or misaligned primer ends. These misaligned primers can be extended by PolIV. Exhibits no 3'-5' exonuclease (proofreading) activity. May be involved in translesional synthesis, in conjunction with the beta clamp from PolIII. The chain is DNA polymerase IV from Corynebacterium glutamicum (strain R).